Consider the following 264-residue polypeptide: MKKLKLHGFNNLTKSLSFCIYDICYAKTAEERDGYIAYIDELYNANRLTEILSETCSIIGANILNIARQDYEPQGASVTILVSEEPIDPKLIDQTEHPGPLPETVVAHLDKSHICVHTYPESHPEGGLCTFRADIEVSTCGVISPLKALNYLIHQLESDIVTIDYRVRGFTRDVNGMKHFIDHEINSIQNFMSEDMKSLYDMVDVNVYQENIFHTKMLLKEFDLKHYMFHTKPEDLTETERQQITAALWKEMREIYYGRNISAV.

Catalysis depends on Ser-112, which acts as the Schiff-base intermediate with substrate; via pyruvic acid. Ser-112 is modified (pyruvic acid (Ser); by autocatalysis). The active-site Proton acceptor; for processing activity is His-117. The active-site Proton donor; for catalytic activity is Cys-140.

It belongs to the prokaryotic AdoMetDC family. Type 2 subfamily. As to quaternary structure, heterooctamer of four alpha and four beta chains arranged as a tetramer of alpha/beta heterodimers. The cofactor is pyruvate. In terms of processing, is synthesized initially as an inactive proenzyme. Formation of the active enzyme involves a self-maturation process in which the active site pyruvoyl group is generated from an internal serine residue via an autocatalytic post-translational modification. Two non-identical subunits are generated from the proenzyme in this reaction, and the pyruvate is formed at the N-terminus of the alpha chain, which is derived from the carboxyl end of the proenzyme. The post-translation cleavage follows an unusual pathway, termed non-hydrolytic serinolysis, in which the side chain hydroxyl group of the serine supplies its oxygen atom to form the C-terminus of the beta chain, while the remainder of the serine residue undergoes an oxidative deamination to produce ammonia and the pyruvoyl group blocking the N-terminus of the alpha chain.

It catalyses the reaction S-adenosyl-L-methionine + H(+) = S-adenosyl 3-(methylsulfanyl)propylamine + CO2. It participates in amine and polyamine biosynthesis; S-adenosylmethioninamine biosynthesis; S-adenosylmethioninamine from S-adenosyl-L-methionine: step 1/1. In terms of biological role, catalyzes the decarboxylation of S-adenosylmethionine to S-adenosylmethioninamine (dcAdoMet), the propylamine donor required for the synthesis of the polyamines spermine and spermidine from the diamine putrescine. This is S-adenosylmethionine decarboxylase proenzyme from Salmonella typhi.